The sequence spans 627 residues: tRNA uridine 5-carboxymethylaminomethyl modification enzyme MnmG (627 aa).

FAD contacts are provided by residues 13-18 (GGGHAG), Val125, and Ser180. 274–288 (GPRYCPSIEDKVVRF) provides a ligand contact to NAD(+). Residue Gln371 coordinates FAD.

Belongs to the MnmG family. In terms of assembly, homodimer. Heterotetramer of two MnmE and two MnmG subunits. Requires FAD as cofactor.

It localises to the cytoplasm. Functionally, NAD-binding protein involved in the addition of a carboxymethylaminomethyl (cmnm) group at the wobble position (U34) of certain tRNAs, forming tRNA-cmnm(5)s(2)U34. This is tRNA uridine 5-carboxymethylaminomethyl modification enzyme MnmG from Francisella philomiragia subsp. philomiragia (strain ATCC 25017 / CCUG 19701 / FSC 153 / O#319-036).